Here is a 118-residue protein sequence, read N- to C-terminus: Large ribosomal subunit protein uL18 (118 aa).

It belongs to the universal ribosomal protein uL18 family. Part of the 50S ribosomal subunit; part of the 5S rRNA/L5/L18/L25 subcomplex. Contacts the 5S and 23S rRNAs.

In terms of biological role, this is one of the proteins that bind and probably mediate the attachment of the 5S RNA into the large ribosomal subunit, where it forms part of the central protuberance. The polypeptide is Large ribosomal subunit protein uL18 (Rickettsia felis (strain ATCC VR-1525 / URRWXCal2) (Rickettsia azadi)).